The primary structure comprises 676 residues: Forkhead box protein biniou (676 aa).

Disordered stretches follow at residues 22–50 (YHDP…GHPY), 131–160 (AHSA…SSST), 203–232 (QEQA…SRIS), 249–312 (NYSS…PEKP), and 583–651 (IQHA…AYLP). Positions 34–48 (PHAHSHPHQHTHTGH) are enriched in basic residues. Positions 133-160 (SAGSASPQSNSKTPTDLPQDLQYASSST) are enriched in polar residues. Positions 203-220 (QEQAGQQQPQQLPAQQLQ) are enriched in low complexity. Residues 257–273 (PAKSLNGSESSPPSQNH) show a composition bias toward polar residues. The fork-head DNA-binding region spans 311–408 (KPALSYINMI…DEGSLRRRPR (98 aa)). Over residues 583–593 (IQHAQAQAQAQ) the composition is skewed to low complexity. The segment covering 594 to 611 (AHHHHHQHHASHPSHSHQ) has biased composition (basic residues). Low complexity predominate over residues 612-625 (GHGSMHQNHGTSST). Over residues 637 to 647 (GIDHSPIDRKP) the composition is skewed to basic and acidic residues.

In terms of assembly, binds to DNA. As to expression, in embryo, expressed in all types of visceral muscles and their progenitors (at protein level). In late stage 10 embryo, expressed in the caudal visceral mesoderm and trunk and hindgut visceral mesoderm progenitors.

The protein resides in the nucleus. Functionally, component of a regulatory network controlling visceral mesoderm development and midgut morphogenesis. Transcriptional regulator involved in the activation of a large number of genes in the visceral mesoderm including betaTub60D, dpp and Hand. Binds to and regulates a number of enhancers driving expression in the visceral mesoderm in a temporally and spatially restricted manner. Also to binds to enhancers cooperatively with activators, such as bap or HLH54F, to coregulate expression of shared target genes in the visceral mesoderm. Binds to the Ndg enhancer and drives expression of Ndg in the late visceral musculature. May be involved in the transcriptional regulation of wupA in the visceral mesoderm. Plays an indirect role in the later stages of salivary gland positioning. The sequence is that of Forkhead box protein biniou (bin) from Drosophila melanogaster (Fruit fly).